The primary structure comprises 382 residues: Fimbrial usher domain-containing protein YdeT (382 aa).

This chain is Fimbrial usher domain-containing protein YdeT (ydeT), found in Escherichia coli O157:H7.